A 223-amino-acid polypeptide reads, in one-letter code: ATP phosphoribosyltransferase (223 aa).

This sequence belongs to the ATP phosphoribosyltransferase family. Short subfamily. Heteromultimer composed of HisG and HisZ subunits.

It is found in the cytoplasm. The catalysed reaction is 1-(5-phospho-beta-D-ribosyl)-ATP + diphosphate = 5-phospho-alpha-D-ribose 1-diphosphate + ATP. It participates in amino-acid biosynthesis; L-histidine biosynthesis; L-histidine from 5-phospho-alpha-D-ribose 1-diphosphate: step 1/9. Catalyzes the condensation of ATP and 5-phosphoribose 1-diphosphate to form N'-(5'-phosphoribosyl)-ATP (PR-ATP). Has a crucial role in the pathway because the rate of histidine biosynthesis seems to be controlled primarily by regulation of HisG enzymatic activity. The protein is ATP phosphoribosyltransferase of Desulfitobacterium hafniense (strain Y51).